A 140-amino-acid chain; its full sequence is Blasticidin-S deaminase (140 aa).

Residues 8-140 (QQDLELVEVA…ELIPLKYTRN (133 aa)) form the CMP/dCMP-type deaminase domain. Cysteine 59 provides a ligand contact to Zn(2+). The active-site Proton donor is glutamate 61. Zn(2+) contacts are provided by cysteine 100 and cysteine 103.

This sequence belongs to the cytidine and deoxycytidylate deaminase family. Requires Zn(2+) as cofactor.

It catalyses the reaction blasticidin S + H2O + H(+) = deaminohydroxyblasticidin S + NH4(+). Catalyzes the deamination of the cytosine moiety of the antibiotics blasticidin S, cytomycin and acetylblasticidin S. The sequence is that of Blasticidin-S deaminase (bsr) from Bacillus cereus.